We begin with the raw amino-acid sequence, 177 residues long: Peptide methionine sulfoxide reductase MsrA (177 aa).

The active site involves Cys10.

This sequence belongs to the MsrA Met sulfoxide reductase family.

It carries out the reaction L-methionyl-[protein] + [thioredoxin]-disulfide + H2O = L-methionyl-(S)-S-oxide-[protein] + [thioredoxin]-dithiol. The catalysed reaction is [thioredoxin]-disulfide + L-methionine + H2O = L-methionine (S)-S-oxide + [thioredoxin]-dithiol. Has an important function as a repair enzyme for proteins that have been inactivated by oxidation. Catalyzes the reversible oxidation-reduction of methionine sulfoxide in proteins to methionine. This chain is Peptide methionine sulfoxide reductase MsrA, found in Saccharolobus solfataricus (strain ATCC 35092 / DSM 1617 / JCM 11322 / P2) (Sulfolobus solfataricus).